Consider the following 64-residue polypeptide: Large ribosomal subunit protein bL35 (64 aa).

Belongs to the bacterial ribosomal protein bL35 family.

The chain is Large ribosomal subunit protein bL35 from Lactiplantibacillus plantarum (strain ATCC BAA-793 / NCIMB 8826 / WCFS1) (Lactobacillus plantarum).